The primary structure comprises 277 residues: Phosphoenolpyruvate synthase regulatory protein (277 aa).

ADP is bound at residue 157–164 (GVSRCGKT).

This sequence belongs to the pyruvate, phosphate/water dikinase regulatory protein family. PSRP subfamily.

It catalyses the reaction [pyruvate, water dikinase] + ADP = [pyruvate, water dikinase]-phosphate + AMP + H(+). The catalysed reaction is [pyruvate, water dikinase]-phosphate + phosphate + H(+) = [pyruvate, water dikinase] + diphosphate. Bifunctional serine/threonine kinase and phosphorylase involved in the regulation of the phosphoenolpyruvate synthase (PEPS) by catalyzing its phosphorylation/dephosphorylation. The chain is Phosphoenolpyruvate synthase regulatory protein from Escherichia fergusonii (strain ATCC 35469 / DSM 13698 / CCUG 18766 / IAM 14443 / JCM 21226 / LMG 7866 / NBRC 102419 / NCTC 12128 / CDC 0568-73).